Here is a 727-residue protein sequence, read N- to C-terminus: Elongation factor 2 (727 aa).

Residues 19–260 (DQIRNMGICA…MAIKHLPNPL (242 aa)) form the tr-type G domain. GTP-binding positions include 28 to 35 (AHIDHGKT), 94 to 98 (DTPGH), and 148 to 151 (NKVD). A Diphthamide modification is found at H603.

The protein belongs to the TRAFAC class translation factor GTPase superfamily. Classic translation factor GTPase family. EF-G/EF-2 subfamily.

The protein resides in the cytoplasm. In terms of biological role, catalyzes the GTP-dependent ribosomal translocation step during translation elongation. During this step, the ribosome changes from the pre-translocational (PRE) to the post-translocational (POST) state as the newly formed A-site-bound peptidyl-tRNA and P-site-bound deacylated tRNA move to the P and E sites, respectively. Catalyzes the coordinated movement of the two tRNA molecules, the mRNA and conformational changes in the ribosome. This chain is Elongation factor 2, found in Methanococcus maripaludis (strain C7 / ATCC BAA-1331).